A 687-amino-acid polypeptide reads, in one-letter code: Hemin receptor (687 aa).

The first 28 residues, 1-28, serve as a signal peptide directing secretion; that stretch reads MPRSTSDRFRWSPLSLAIACTLSLAVQA. The short motif at 44 to 51 is the TonB box element; the sequence is DTMVVTAT. In terms of domain architecture, TBDR plug spans 56–167; it reads SSFEAPMMVT…LGGVISYETV (112 aa). Residues 178-687 enclose the TBDR beta-barrel domain; the sequence is NSGYRVYSAA…NAKFFVSYQW (510 aa). A disordered region spans residues 319–338; that stretch reads ARPQGTPEEGRKQTTKGGKL. The segment covering 326–338 has biased composition (basic and acidic residues); that stretch reads EEGRKQTTKGGKL. The TonB C-terminal box signature appears at 670–687; that stretch reads QGVPQDGRNAKFFVSYQW.

This sequence belongs to the TonB-dependent receptor family.

The protein localises to the cell outer membrane. In terms of biological role, this protein is involved in the initial step of iron uptake by binding hemin, an iron chelatin siderophore that allows the bacteria to extract iron from the environment. The protein is Hemin receptor (hemR) of Yersinia enterocolitica.